A 226-amino-acid polypeptide reads, in one-letter code: Thioredoxin domain-containing protein 9 (226 aa).

A Thioredoxin domain is found at 75–180 (EIGSERDFFQ…TTETLEWRLG (106 aa)). S188, S221, and S223 each carry phosphoserine.

In terms of assembly, forms ternary complexes with the chaperonin TCP1 complex, spanning the cylindrical chaperonin cavity and contacting at least 2 subunits. Expressed in testis, liver, heart, kidney, brain, spleen and lung.

It localises to the cytoplasm. Its subcellular location is the nucleus. The protein resides in the cytoskeleton. The protein localises to the microtubule organizing center. It is found in the centrosome. It localises to the midbody. Functionally, significantly diminishes the chaperonin TCP1 complex ATPase activity, thus negatively impacts protein folding, including that of actin or tubulin. This is Thioredoxin domain-containing protein 9 (Txndc9) from Mus musculus (Mouse).